We begin with the raw amino-acid sequence, 338 residues long: Aspartate carbamoyltransferase catalytic subunit (338 aa).

Carbamoyl phosphate is bound by residues Arg59 and Thr60. Lys87 provides a ligand contact to L-aspartate. The carbamoyl phosphate site is built by Arg109, His142, and Gln145. The L-aspartate site is built by Arg182 and Arg253. Carbamoyl phosphate contacts are provided by Gly294 and Pro295.

It belongs to the aspartate/ornithine carbamoyltransferase superfamily. ATCase family. Heterododecamer (2C3:3R2) of six catalytic PyrB chains organized as two trimers (C3), and six regulatory PyrI chains organized as three dimers (R2).

The catalysed reaction is carbamoyl phosphate + L-aspartate = N-carbamoyl-L-aspartate + phosphate + H(+). It functions in the pathway pyrimidine metabolism; UMP biosynthesis via de novo pathway; (S)-dihydroorotate from bicarbonate: step 2/3. Functionally, catalyzes the condensation of carbamoyl phosphate and aspartate to form carbamoyl aspartate and inorganic phosphate, the committed step in the de novo pyrimidine nucleotide biosynthesis pathway. This is Aspartate carbamoyltransferase catalytic subunit from Prochlorococcus marinus (strain AS9601).